Here is a 268-residue protein sequence, read N- to C-terminus: Glucosamine-6-phosphate deaminase (268 aa).

Catalysis depends on Asp67, which acts as the Proton acceptor; for enolization step. Asn136 (for ring-opening step) is an active-site residue. Residue His138 is the Proton acceptor; for ring-opening step of the active site. The active-site For ring-opening step is Glu143.

The protein belongs to the glucosamine/galactosamine-6-phosphate isomerase family. NagB subfamily. In terms of assembly, homohexamer.

The catalysed reaction is alpha-D-glucosamine 6-phosphate + H2O = beta-D-fructose 6-phosphate + NH4(+). It functions in the pathway amino-sugar metabolism; N-acetylneuraminate degradation; D-fructose 6-phosphate from N-acetylneuraminate: step 5/5. Catalyzes the reversible isomerization-deamination of glucosamine 6-phosphate (GlcN6P) to form fructose 6-phosphate (Fru6P) and ammonium ion. The protein is Glucosamine-6-phosphate deaminase of Shewanella loihica (strain ATCC BAA-1088 / PV-4).